The chain runs to 104 residues: Cytochrome c6 (104 aa).

A signal peptide spans 1–20 (MKSLLTFILTTIFCIQQVWA). The heme c site is built by Cys-34, Cys-37, His-38, and Met-78.

It belongs to the cytochrome c family. PetJ subfamily. As to quaternary structure, monomer. Post-translationally, binds 1 heme c group covalently per subunit.

The protein localises to the plastid. It is found in the chloroplast thylakoid lumen. Its function is as follows. Functions as an electron carrier between membrane-bound cytochrome b6-f and photosystem I in oxygenic photosynthesis. The polypeptide is Cytochrome c6 (Cyanidioschyzon merolae (strain NIES-3377 / 10D) (Unicellular red alga)).